A 141-amino-acid polypeptide reads, in one-letter code: Hemoglobin D subunit alpha (141 aa).

Residues 1 to 141 (MLTEDDKQLI…VSAVLAEKYR (141 aa)) form the Globin domain. Histidine 58 is an O2 binding site. Residue histidine 87 participates in heme b binding.

Belongs to the globin family. As to quaternary structure, tetramer of two alpha chains and two beta chains. As to expression, red blood cells.

Its function is as follows. Involved in oxygen transport from the lung to the various peripheral tissues. The chain is Hemoglobin D subunit alpha from Aldabrachelys gigantea (Aldabra giant tortoise).